Here is a 336-residue protein sequence, read N- to C-terminus: Dihydroorotate dehydrogenase (quinone) (336 aa).

FMN contacts are provided by residues 62 to 66 and T86; that span reads AGLDK. A substrate-binding site is contributed by K66. Residue 111 to 115 participates in substrate binding; it reads NRMGF. Residues N139 and N172 each coordinate FMN. Substrate is bound at residue N172. Catalysis depends on S175, which acts as the Nucleophile. Residue N177 coordinates substrate. Positions 217 and 245 each coordinate FMN. 246–247 is a binding site for substrate; the sequence is NT. FMN contacts are provided by residues G268, G297, and 318-319; that span reads YS.

Belongs to the dihydroorotate dehydrogenase family. Type 2 subfamily. Monomer. Requires FMN as cofactor.

It localises to the cell membrane. The enzyme catalyses (S)-dihydroorotate + a quinone = orotate + a quinol. It participates in pyrimidine metabolism; UMP biosynthesis via de novo pathway; orotate from (S)-dihydroorotate (quinone route): step 1/1. Catalyzes the conversion of dihydroorotate to orotate with quinone as electron acceptor. The sequence is that of Dihydroorotate dehydrogenase (quinone) from Escherichia coli O17:K52:H18 (strain UMN026 / ExPEC).